The sequence spans 314 residues: Zinc-binding alcohol dehydrogenase domain-containing protein cipB (314 aa).

The protein belongs to the zinc-containing alcohol dehydrogenase family.

Involved in osmoadaptation. This Emericella nidulans (strain FGSC A4 / ATCC 38163 / CBS 112.46 / NRRL 194 / M139) (Aspergillus nidulans) protein is Zinc-binding alcohol dehydrogenase domain-containing protein cipB (cipB).